A 1431-amino-acid chain; its full sequence is Probable serine/threonine-protein kinase irlA (1431 aa).

Over residues 1 to 10 (MTKPIFKSKT) the composition is skewed to basic residues. Disordered stretches follow at residues 1–81 (MTKP…EKEE) and 736–879 (KREK…NNNK). Positions 25 to 43 (NEDEEEEEGGEEGGEEEEI) are enriched in acidic residues. A compositionally biased stretch (low complexity) spans 46-67 (NKNSNNSSSNSNNNNNDNNNNN). Coiled coils occupy residues 57–97 (NNNN…LDME) and 715–759 (KKRS…NNNN). A compositionally biased stretch (basic and acidic residues) spans 68-81 (GEERKVEKEEEKEE). A compositionally biased stretch (basic residues) spans 738 to 749 (EKKKQKDKKKNK). The span at 750-776 (SNQNQKNNNNQNNQSNNNKINSPSSNK) shows a compositional bias: low complexity. Over residues 777–791 (LTQNVTPPSSPVNII) the composition is skewed to polar residues. A compositionally biased stretch (low complexity) spans 792-812 (TSSSTTSSSTSSTTSSTTSST). Positions 821 to 838 (TLPIKTSSPTKPESQKPS) are enriched in polar residues. The span at 854-878 (NNNNNNNNNNNNNNNNNNNNNNNNN) shows a compositional bias: low complexity. A coiled-coil region spans residues 860–971 (NNNNNNNNNN…QESIQLNQTL (112 aa)). The region spanning 987–1261 (RDENNIIGRG…IDTILNHPLF (275 aa)) is the Protein kinase domain. ATP contacts are provided by residues 993–1001 (IGRGSNGTL) and Lys1016. The active-site Proton acceptor is Asp1130. The region spanning 1264–1431 (TNEKIKFYES…NSKDYLNIKF (168 aa)) is the KEN domain.

It belongs to the protein kinase superfamily. Ser/Thr protein kinase family.

It catalyses the reaction L-seryl-[protein] + ATP = O-phospho-L-seryl-[protein] + ADP + H(+). The enzyme catalyses L-threonyl-[protein] + ATP = O-phospho-L-threonyl-[protein] + ADP + H(+). The sequence is that of Probable serine/threonine-protein kinase irlA (irlA) from Dictyostelium discoideum (Social amoeba).